The sequence spans 238 residues: RxLR effector protein PITG_14788 (238 aa).

An N-terminal signal peptide occupies residues 1 to 23; that stretch reads MKSLHAVNLVLLLLLACFAPAPA. The RxLR-dEER signature appears at 47–65; sequence RLLRAHSSGKEEQKEEEER.

Belongs to the RxLR effector family.

The protein resides in the secreted. It localises to the host cytoplasm. Its subcellular location is the host cytoskeleton. It is found in the host nucleus. The protein localises to the host nucleolus. Effector that enhances P.infestans colonization of Nicotiana benthamiana leaves. This Phytophthora infestans (strain T30-4) (Potato late blight agent) protein is RxLR effector protein PITG_14788.